We begin with the raw amino-acid sequence, 81 residues long: Putative membrane protein insertion efficiency factor (81 aa).

The segment at 61 to 81 (NPGGYDPVPPIPTSRSSSMAE) is disordered.

The protein belongs to the UPF0161 family.

The protein resides in the cell inner membrane. Could be involved in insertion of integral membrane proteins into the membrane. This is Putative membrane protein insertion efficiency factor from Pseudomonas fluorescens (strain Pf0-1).